An 831-amino-acid chain; its full sequence is Myosin-A (831 aa).

Residues 99 to 773 (MTYGDIGMLP…GAKELTQIQR (675 aa)) form the Myosin motor domain. 193–200 (GESGAGKT) contacts ATP. Positions 663–673 (PHFIRCIKPND) are actin-binding. Residues 775 to 831 (CLSSWEPLVSVLEAYYAGRRHKKQLLKKTPFIIRAQAHIRRHLVDNNVSPATVQPAF) are tail.

The protein belongs to the TRAFAC class myosin-kinesin ATPase superfamily. Myosin family.

Its subcellular location is the cell membrane. Functionally, myosins are actin-based motor molecules with ATPase activity. Unconventional myosins serve in intracellular movements. Their highly divergent tails are presumed to bind to membranous compartments, which would be moved relative to actin filaments. This Toxoplasma gondii protein is Myosin-A.